The primary structure comprises 137 residues: Cofilin-1A (137 aa).

The region spanning 2–135 (SSGIALAPNC…KDSCFYEKCT (134 aa)) is the ADF-H domain.

Belongs to the actin-binding proteins ADF family.

The protein localises to the nucleus matrix. Its subcellular location is the cytoplasm. It localises to the cytoskeleton. Functionally, controls reversibly actin polymerization and depolymerization in a pH-sensitive manner. It has the ability to bind G- and F-actin in a 1:1 ratio of cofilin to actin. It is the major component of intranuclear and cytoplasmic actin rods. This chain is Cofilin-1A (cofA), found in Dictyostelium discoideum (Social amoeba).